Here is a 401-residue protein sequence, read N- to C-terminus: Alternative oxidase, mitochondrial (401 aa).

The tract at residues 53–81 (KRASLSLQPSVREAEKSQGPVVGSEGRGV) is disordered. A helical membrane pass occupies residues 184–204 (LFRIILLESIAGVPGMVGGTL). The Fe cation site is built by Glu191, Glu230, and His233. The helical transmembrane segment at 249 to 269 (ALVLAAQGVFYNAFFLTYLIS) threads the bilayer. Glu281, Glu282, Glu335, and His338 together coordinate Fe cation.

Belongs to the alternative oxidase family. Fe cation is required as a cofactor.

It localises to the mitochondrion inner membrane. Its function is as follows. Catalyzes cyanide-resistant oxygen consumption. May increase respiration when the cytochrome respiratory pathway is restricted, or in response to low temperatures. This Cryptococcus neoformans var. grubii serotype A (strain H99 / ATCC 208821 / CBS 10515 / FGSC 9487) (Filobasidiella neoformans var. grubii) protein is Alternative oxidase, mitochondrial (AOX1).